The primary structure comprises 210 residues: Tumor protein D53 homolog (210 aa).

The stretch at 22–73 (VTDVDFTSMISEEEKEELKAELAKLEDEISTLRQVLAAKEKHLIEIKQKLGM) forms a coiled coil. The segment covering 185–197 (SSTAHASAQSSLA) has biased composition (polar residues). Positions 185-210 (SSTAHASAQSSLAGTRLPESEEELQC) are disordered.

The protein belongs to the TPD52 family. In terms of assembly, forms a homodimer or heterodimer with other members of the family.

This chain is Tumor protein D53 homolog (TPD52L1), found in Gallus gallus (Chicken).